A 377-amino-acid chain; its full sequence is Chaperone protein DnaJ (377 aa).

Residues 5–70 (DYYEVLGVSR…DKKAAYDQFG (66 aa)) form the J domain. The CR-type zinc-finger motif lies at 133 to 211 (GLTKELRIPT…CHGDGRVEKS (79 aa)). 8 residues coordinate Zn(2+): cysteine 146, cysteine 149, cysteine 163, cysteine 166, cysteine 185, cysteine 188, cysteine 199, and cysteine 202. 4 CXXCXGXG motif repeats span residues 146–153 (CDLCEGSG), 163–170 (CGTCHGQG), 185–192 (CPTCHGRG), and 199–206 (CSKCHGDG).

This sequence belongs to the DnaJ family. In terms of assembly, homodimer. Zn(2+) serves as cofactor.

The protein resides in the cytoplasm. Functionally, participates actively in the response to hyperosmotic and heat shock by preventing the aggregation of stress-denatured proteins and by disaggregating proteins, also in an autonomous, DnaK-independent fashion. Unfolded proteins bind initially to DnaJ; upon interaction with the DnaJ-bound protein, DnaK hydrolyzes its bound ATP, resulting in the formation of a stable complex. GrpE releases ADP from DnaK; ATP binding to DnaK triggers the release of the substrate protein, thus completing the reaction cycle. Several rounds of ATP-dependent interactions between DnaJ, DnaK and GrpE are required for fully efficient folding. Also involved, together with DnaK and GrpE, in the DNA replication of plasmids through activation of initiation proteins. The polypeptide is Chaperone protein DnaJ (Shewanella baltica (strain OS195)).